Consider the following 740-residue polypeptide: Alpha-1,6-mannosylglycoprotein 6-beta-N-acetylglucosaminyltransferase A (740 aa).

The Cytoplasmic segment spans residues 1–13 (MAFFTPWKLSSQK). A helical; Signal-anchor for type II membrane protein transmembrane segment spans residues 14–30 (LGFFLVTFGFIWGMMLL). The Lumenal portion of the chain corresponds to 31–740 (HFTIQQRTQP…GQVALCKDCL (710 aa)). N109, N114, and N117 each carry an N-linked (GlcNAc...) asparagine glycan. 9 cysteine pairs are disulfide-bonded: C144-C182, C155-C195, C171-C337, C371-C625, C648-C723, C652-C725, C659-C712, C680-C701, and C736-C739. The segment at 212–740 (NSLAEIRTDF…GQVALCKDCL (529 aa)) is sufficient for catalytic activity. N333 carries N-linked (GlcNAc...) asparagine glycosylation. 377–378 (DS) serves as a coordination point for substrate. N-linked (GlcNAc...) asparagine glycosylation is found at N432 and N446. E525 is a UDP-N-acetyl-alpha-D-glucosamine binding site. Position 553 (K553) interacts with substrate.

The protein belongs to the glycosyltransferase 18 family. Post-translationally, N-glycosylated. A secreted form is released from the membrane after cleavage by gamma-secretase.

It is found in the golgi apparatus membrane. The protein resides in the secreted. It catalyses the reaction N(4)-{beta-D-GlcNAc-(1-&gt;2)-[beta-D-GlcNAc-(1-&gt;4)]-alpha-D-Man-(1-&gt;3)-[beta-D-GlcNAc-(1-&gt;2)-alpha-D-Man-(1-&gt;6)]-beta-D-Man-(1-&gt;4)-beta-D-GlcNAc-(1-&gt;4)-beta-D-GlcNAc}-L-asparaginyl-[protein] + UDP-N-acetyl-alpha-D-glucosamine = N(4)-{beta-D-GlcNAc-(1-&gt;2)-[beta-D-GlcNAc-(1-&gt;4)]-alpha-D-Man-(1-&gt;3)-[beta-D-GlcNAc-(1-&gt;2)-[beta-D-GlcNAc-(1-&gt;6)]-alpha-D-Man-(1-&gt;6)]-beta-D-Man-(1-&gt;4)-beta-D-GlcNAc-(1-&gt;4)-beta-D-GlcNAc}-L-asparaginyl-[protein] + UDP + H(+). Its pathway is protein modification; protein glycosylation. Catalyzes the addition of N-acetylglucosamine (GlcNAc) in beta 1-6 linkage to the alpha-linked mannose of biantennary N-linked oligosaccharides. Catalyzes an important step in the biosynthesis of branched, complex-type N-glycans, such as those found on EGFR, TGFR (TGF-beta receptor) and CDH2. Via its role in the biosynthesis of complex N-glycans, plays an important role in the activation of cellular signaling pathways, reorganization of the actin cytoskeleton, cell-cell adhesion and cell migration. MGAT5-dependent EGFR N-glycosylation enhances the interaction between EGFR and LGALS3 and thereby prevents rapid EGFR endocytosis and prolongs EGFR signaling. Required for efficient interaction between TGFB1 and its receptor. Enhances activation of intracellular signaling pathways by several types of growth factors, including FGF2, PDGF, IGF, TGFB1 and EGF. MGAT5-dependent CDH2 N-glycosylation inhibits CDH2-mediated homotypic cell-cell adhesion and contributes to the regulation of downstream signaling pathways. Promotes cell migration. Contributes to the regulation of the inflammatory response. MGAT5-dependent TCR N-glycosylation enhances the interaction between TCR and LGALS3, limits agonist-induced TCR clustering, and thereby dampens TCR-mediated responses to antigens. Required for normal leukocyte evasation and accumulation at sites of inflammation. Inhibits attachment of monocytes to the vascular endothelium and subsequent monocyte diapedesis. Its function is as follows. Promotes proliferation of umbilical vein endothelial cells and angiogenesis, at least in part by promoting the release of the growth factor FGF2 from the extracellular matrix. This Cricetulus griseus (Chinese hamster) protein is Alpha-1,6-mannosylglycoprotein 6-beta-N-acetylglucosaminyltransferase A (MGAT5).